Reading from the N-terminus, the 87-residue chain is Sec-independent protein translocase protein TatA (87 aa).

The helical transmembrane segment at 1–21 (MGSFSIWHWLIVLLIVVMVFG) threads the bilayer. The disordered stretch occupies residues 40 to 87 (KDGMKDGSTPEGTPASTTAATPPAGQVTNQQAHAADPGTIDVEAKHKG). Low complexity predominate over residues 46–64 (GSTPEGTPASTTAATPPAG).

It belongs to the TatA/E family. In terms of assembly, the Tat system comprises two distinct complexes: a TatABC complex, containing multiple copies of TatA, TatB and TatC subunits, and a separate TatA complex, containing only TatA subunits. Substrates initially bind to the TatABC complex, which probably triggers association of the separate TatA complex to form the active translocon.

It is found in the cell inner membrane. Part of the twin-arginine translocation (Tat) system that transports large folded proteins containing a characteristic twin-arginine motif in their signal peptide across membranes. TatA could form the protein-conducting channel of the Tat system. In Paracidovorax citrulli (strain AAC00-1) (Acidovorax citrulli), this protein is Sec-independent protein translocase protein TatA.